A 429-amino-acid polypeptide reads, in one-letter code: Glutamyl-tRNA reductase (429 aa).

Substrate contacts are provided by residues 50-53 (TCNR), serine 108, 113-115 (EPQ), and glutamine 119. Catalysis depends on cysteine 51, which acts as the Nucleophile. 188–193 (GAGEMI) is a binding site for NADP(+).

This sequence belongs to the glutamyl-tRNA reductase family. Homodimer.

It carries out the reaction (S)-4-amino-5-oxopentanoate + tRNA(Glu) + NADP(+) = L-glutamyl-tRNA(Glu) + NADPH + H(+). The protein operates within porphyrin-containing compound metabolism; protoporphyrin-IX biosynthesis; 5-aminolevulinate from L-glutamyl-tRNA(Glu): step 1/2. Its function is as follows. Catalyzes the NADPH-dependent reduction of glutamyl-tRNA(Glu) to glutamate 1-semialdehyde (GSA). This Polaromonas naphthalenivorans (strain CJ2) protein is Glutamyl-tRNA reductase.